A 1071-amino-acid chain; its full sequence is Fused isobutyryl-CoA mutase (1071 aa).

One can recognise a B12-binding domain in the interval 12 to 149; sequence PVRFVTSAAL…QTCDVDLTGE (138 aa). Histidine 25 contributes to the adenosylcob(III)alamin binding site. The GTPase chaperone MeaI stretch occupies residues 153-400; the sequence is VEAVLAGERT…YQHLLELLGA (248 aa). 203–208 serves as a coordination point for GTP; it reads GSGKSS. 4 residues coordinate Mg(2+): serine 207, valine 232, aspartate 233, and aspartate 246. Arginine 249 lines the GTP pocket. Residues glutamate 293 and threonine 294 each contribute to the Mg(2+) site. 340–343 is a binding site for GTP; sequence NKFE. The tract at residues 401–558 is linker; that stretch reads RGLPVDEGVL…RSENLPGHFP (158 aa). Substrate contacts are provided by phenylalanine 566, arginine 601, arginine 707, tyrosine 751, serine 800, arginine 835, and lysine 840. Positions 952 and 1070 each coordinate GTP.

This sequence belongs to the IcmF family. As to quaternary structure, homodimer. The cofactor is adenosylcob(III)alamin. Mg(2+) is required as a cofactor.

It carries out the reaction 2-methylpropanoyl-CoA = butanoyl-CoA. The enzyme catalyses GTP + H2O = GDP + phosphate + H(+). Functionally, catalyzes the reversible interconversion of isobutyryl-CoA and n-butyryl-CoA, using radical chemistry. Also exhibits GTPase activity, associated with its G-protein domain (MeaI) that functions as a chaperone that assists cofactor delivery and proper holo-enzyme assembly. Does not exhibit methylmalonyl-CoA mutase (MCM) activity. This Nocardia farcinica (strain IFM 10152) protein is Fused isobutyryl-CoA mutase.